The chain runs to 72 residues: Translation initiation factor IF-1 (72 aa).

In terms of domain architecture, S1-like spans 1–72 (MAKDDVIEVE…TRGRIVWRGK (72 aa)).

Belongs to the IF-1 family. Component of the 30S ribosomal translation pre-initiation complex which assembles on the 30S ribosome in the order IF-2 and IF-3, IF-1 and N-formylmethionyl-tRNA(fMet); mRNA recruitment can occur at any time during PIC assembly.

The protein localises to the cytoplasm. Functionally, one of the essential components for the initiation of protein synthesis. Stabilizes the binding of IF-2 and IF-3 on the 30S subunit to which N-formylmethionyl-tRNA(fMet) subsequently binds. Helps modulate mRNA selection, yielding the 30S pre-initiation complex (PIC). Upon addition of the 50S ribosomal subunit IF-1, IF-2 and IF-3 are released leaving the mature 70S translation initiation complex. The chain is Translation initiation factor IF-1 from Caldanaerobacter subterraneus subsp. tengcongensis (strain DSM 15242 / JCM 11007 / NBRC 100824 / MB4) (Thermoanaerobacter tengcongensis).